The following is a 1003-amino-acid chain: Anoctamin-2 (1003 aa).

Residues 1 to 68 (MATPGPRDIP…PCGGESTRSS (68 aa)) form a disordered region. Residues 1 to 365 (MATPGPRDIP…FGEKIGLYFA (365 aa)) lie on the Cytoplasmic side of the membrane. Residues 10-21 (PLLPGSPRRLSP) show a composition bias toward low complexity. The chain crosses the membrane as a helical span at residues 366 to 386 (WLGLYTSFLIPSSVIGVIVFL). Residues 387-434 (YGCATIEEDIPSREMCDQQNAFTMCPLCDKSCDYWNLSSACGTAQASH) lie on the Extracellular side of the membrane. Asn-422 carries an N-linked (GlcNAc...) asparagine glycan. The chain crosses the membrane as a helical span at residues 435–455 (LFDNPATVFFSIFMALWATMF). At 456–538 (LENWKRLQMR…KDRFPGYLMN (83 aa)) the chain is on the cytoplasmic side. A helical membrane pass occupies residues 539–559 (FASILFMIALTFSIVFGVIVY). Residues 560–582 (RITTAAALSLNKATRSNVRVTVT) lie on the Extracellular side of the membrane. Residues 583–603 (ATAVIINLVVILILDEIYGAV) form a helical membrane-spanning segment. The Cytoplasmic segment spans residues 604 to 623 (AKWLTKIEVPKTEQTFEERL). A helical membrane pass occupies residues 624-644 (ILKAFLLKFVNAYSPIFYVAF). The Extracellular portion of the chain corresponds to 645 to 748 (FKGRFVGRPG…YTGLTPEYME (104 aa)). A helical transmembrane segment spans residues 749 to 769 (MIIQFGFVTLFVASFPLAPVF). The Cytoplasmic segment spans residues 770 to 801 (ALLNNVIEVRLDAKKFVTELRRPDAVRTKDIG). The chain crosses the membrane as a helical span at residues 802–822 (IWFDILSGIGKFSVISNAFVI). The Extracellular portion of the chain corresponds to 823–907 (AITSDFIPRL…QYWFILSARL (85 aa)). Asn-841, Asn-849, and Asn-856 each carry an N-linked (GlcNAc...) asparagine glycan. The helical transmembrane segment at 908-928 (AFVIIFQNLVMFLSVLVDWMI) threads the bilayer. At 929–1003 (PDIPTDISDQ…MSSGSQHTNV (75 aa)) the chain is on the cytoplasmic side. Residues 961-1003 (MDEPALRSPGGGDRSRSRAASSAPSGQSQLGSMMSSGSQHTNV) are disordered. The segment covering 978–1003 (RAASSAPSGQSQLGSMMSSGSQHTNV) has biased composition (low complexity). The DLG4 binding (PDZ) motif lies at 1001-1003 (TNV).

Belongs to the anoctamin family. Homodimer. Component of a presynaptic protein complex recruited to specialized plasma membrane domains of photoreceptors. Interacts with DLG4 by its C-terminal region. Retina, especially in the photoreceptor synaptic terminals.

The protein localises to the cell membrane. It carries out the reaction chloride(in) = chloride(out). Its activity is regulated as follows. Channel activity is repressed by chloride inhibitors; strongly by niflumic acid (NFA), partially by flufenamic acid (FFA), and only slightly by meclofenamic acid (MFA), 5-Nitro-2-(3-phenylpropylamino)benzoic acid (NPPB), 4-acetamido-4'-isothiocyanato-stilben-2,2'-disulfonate (SITS), and 4,4'-diisothiocyanatostilbene-2,2'-disulfonic acid (DIDS). Calcium-activated chloride channel (CaCC) which may play a role in olfactory signal transduction. Odorant molecules bind to odor-sensing receptors (OSRs), leading to an increase in calcium entry that activates CaCC current which amplifies the depolarization of the OSR cells, ANO2 seems to be the underlying chloride channel involved in this process. May mediate light perception amplification in retina. The protein is Anoctamin-2 (ANO2) of Homo sapiens (Human).